The chain runs to 426 residues: Enolase (426 aa).

Gln163 contributes to the (2R)-2-phosphoglycerate binding site. The Proton donor role is filled by Glu205. Mg(2+)-binding residues include Asp242, Glu285, and Asp312. Lys337, Arg366, Ser367, and Lys388 together coordinate (2R)-2-phosphoglycerate. Lys337 (proton acceptor) is an active-site residue.

The protein belongs to the enolase family. Mg(2+) serves as cofactor.

Its subcellular location is the cytoplasm. It localises to the secreted. The protein resides in the cell surface. It carries out the reaction (2R)-2-phosphoglycerate = phosphoenolpyruvate + H2O. The protein operates within carbohydrate degradation; glycolysis; pyruvate from D-glyceraldehyde 3-phosphate: step 4/5. Its function is as follows. Catalyzes the reversible conversion of 2-phosphoglycerate (2-PG) into phosphoenolpyruvate (PEP). It is essential for the degradation of carbohydrates via glycolysis. In Desulfosudis oleivorans (strain DSM 6200 / JCM 39069 / Hxd3) (Desulfococcus oleovorans), this protein is Enolase.